The following is a 230-amino-acid chain: 3-beta-hydroxysteroid-Delta(8),Delta(7)-isomerase (230 aa).

Position 2 is an N-acetylthreonine (threonine 2). Transmembrane regions (helical) follow at residues serine 29 to leucine 49, leucine 66 to tyrosine 86, methionine 121 to leucine 141, and phenylalanine 185 to leucine 205. The region spanning glycine 61 to valine 204 is the EXPERA domain.

This sequence belongs to the EBP family.

It localises to the endoplasmic reticulum membrane. It is found in the nucleus envelope. The protein localises to the cytoplasmic vesicle. It carries out the reaction lathosterol = 5alpha-cholest-8-en-3beta-ol. The catalysed reaction is zymosterol = 5alpha-cholesta-7,24-dien-3beta-ol. The enzyme catalyses 5,6alpha-epoxy-5alpha-cholestan-3beta-ol + H2O = 5alpha-cholestane-3beta,5,6beta-triol. It catalyses the reaction 5,6beta-epoxy-5beta-cholestan-3beta-ol + H2O = 5alpha-cholestane-3beta,5,6beta-triol. The protein operates within steroid biosynthesis; cholesterol biosynthesis. Isomerase that catalyzes the conversion of Delta(8)-sterols to their corresponding Delta(7)-isomers. Functionally, component of the microsomal antiestrogen binding site (AEBS), a multiproteic complex at the ER membrane that consists of an association between EBP and 7-dehydrocholesterol reductase/DHCR7. This complex is responsible for cholesterol-5,6-epoxide hydrolase (ChEH) activity, which consists in the hydration of cholesterol-5,6-epoxides (5,6-EC) into cholestane-3beta,5alpha,6beta-triol (CT). The precise role of each component of this complex has not been described yet. This Mus musculus (Mouse) protein is 3-beta-hydroxysteroid-Delta(8),Delta(7)-isomerase.